Here is a 994-residue protein sequence, read N- to C-terminus: Sarcoplasmic/endoplasmic reticulum calcium ATPase 1 (994 aa).

At Met-1–Ser-48 the chain is on the cytoplasmic side. A helical transmembrane segment spans residues Leu-49–Ala-69. Topologically, residues Ile-70–Val-89 are lumenal. A helical membrane pass occupies residues Glu-90 to Arg-110. The Cytoplasmic portion of the chain corresponds to Asn-111–Leu-253. Residues Asp-254–Leu-273 form a helical membrane-spanning segment. Topologically, residues Ile-274 to Tyr-295 are lumenal. Residues Phe-296 to Ala-313 form a helical membrane-spanning segment. The Ca(2+) site is built by Val-304, Ala-305, Ile-307, and Glu-309. Topologically, residues Val-314–Met-757 are cytoplasmic. Asp-351 serves as the catalytic 4-aspartylphosphate intermediate. Positions 351 and 353 each coordinate Mg(2+). Thr-353, Glu-442, Arg-489, Lys-515, Arg-560, Thr-625, Gly-626, Asp-627, Arg-678, and Lys-684 together coordinate ATP. Asp-703 is a Mg(2+) binding site. Asn-706 serves as a coordination point for ATP. A helical membrane pass occupies residues Lys-758–Leu-777. Ca(2+) is bound by residues Asn-768 and Glu-771. The Lumenal segment spans residues Thr-778 to Leu-787. Residues Ile-788–Gly-808 form a helical membrane-spanning segment. Positions Ile-788–Gly-808 are interaction with PLN. Positions 796, 799, and 800 each coordinate Ca(2+). Topologically, residues Phe-809–Leu-828 are cytoplasmic. A helical membrane pass occupies residues Ile-829–Ala-851. Residues Ala-852 to Met-897 lie on the Lumenal side of the membrane. Residues Cys-876 and Cys-888 are joined by a disulfide bond. Residues Thr-898–Ser-917 form a helical membrane-spanning segment. Residue Glu-908 participates in Ca(2+) binding. At Glu-918–Asn-930 the chain is on the cytoplasmic side. Residues Phe-931–Tyr-949 traverse the membrane as a helical segment. The tract at residues Trp-932–Leu-943 is interaction with PLN. Residues Val-950–Val-964 are Lumenal-facing. A helical membrane pass occupies residues Glu-965 to Lys-985. The Cytoplasmic segment spans residues Phe-986–Gly-994.

Belongs to the cation transport ATPase (P-type) (TC 3.A.3) family. Type IIA subfamily. In terms of assembly, interacts with sarcolipin (SLN). Interacts with phospholamban (PLN). Interacts with myoregulin (MRLN). Interacts with DWORF. Interacts with VMP1. Requires Mg(2+) as cofactor.

It localises to the endoplasmic reticulum membrane. The protein resides in the sarcoplasmic reticulum membrane. The enzyme catalyses Ca(2+)(in) + ATP + H2O = Ca(2+)(out) + ADP + phosphate + H(+). Its activity is regulated as follows. Inhibited by sarcolipin (SLN) and myoregulin (MRLN). Also shown to be inhibited by phospholamban (PLN) in vitro. Enhanced by DWORF; DWORF increases activity by displacing sarcolipin (SLN), phospholamban (PLN) and myoregulin (MRLN). In terms of biological role, key regulator of striated muscle performance by acting as the major Ca(2+) ATPase responsible for the reuptake of cytosolic Ca(2+) into the sarcoplasmic reticulum. Catalyzes the hydrolysis of ATP coupled with the translocation of calcium from the cytosol to the sarcoplasmic reticulum lumen. Contributes to calcium sequestration involved in muscular excitation/contraction. The polypeptide is Sarcoplasmic/endoplasmic reticulum calcium ATPase 1 (ATP2A1) (Pelophylax lessonae (Pool frog)).